Here is a 508-residue protein sequence, read N- to C-terminus: Aldehyde dehydrogenase family 7 member A1 (508 aa).

244–249 is an NAD(+) binding site; sequence GSSKVG. Glutamate 266 functions as the Proton acceptor in the catalytic mechanism. The active-site Nucleophile is the cysteine 300.

Belongs to the aldehyde dehydrogenase family. In terms of assembly, homotetramer.

It catalyses the reaction an aldehyde + NAD(+) + H2O = a carboxylate + NADH + 2 H(+). In Pisum sativum (Garden pea), this protein is Aldehyde dehydrogenase family 7 member A1.